The following is a 212-amino-acid chain: Pyridoxine/pyridoxamine 5'-phosphate oxidase (212 aa).

Residues 8-11 (RREY) and K66 each bind substrate. Residues 61-66 (RIVLLK), 76-77 (FT), R82, K83, and Q105 contribute to the FMN site. Substrate contacts are provided by Y123, R127, and S131. FMN-binding positions include 140–141 (QS) and W185. 191 to 193 (RLH) is a substrate binding site. R195 serves as a coordination point for FMN.

This sequence belongs to the pyridoxamine 5'-phosphate oxidase family. In terms of assembly, homodimer. FMN serves as cofactor.

It catalyses the reaction pyridoxamine 5'-phosphate + O2 + H2O = pyridoxal 5'-phosphate + H2O2 + NH4(+). The enzyme catalyses pyridoxine 5'-phosphate + O2 = pyridoxal 5'-phosphate + H2O2. Its pathway is cofactor metabolism; pyridoxal 5'-phosphate salvage; pyridoxal 5'-phosphate from pyridoxamine 5'-phosphate: step 1/1. The protein operates within cofactor metabolism; pyridoxal 5'-phosphate salvage; pyridoxal 5'-phosphate from pyridoxine 5'-phosphate: step 1/1. In terms of biological role, catalyzes the oxidation of either pyridoxine 5'-phosphate (PNP) or pyridoxamine 5'-phosphate (PMP) into pyridoxal 5'-phosphate (PLP). The protein is Pyridoxine/pyridoxamine 5'-phosphate oxidase of Shewanella sp. (strain MR-7).